Here is a 247-residue protein sequence, read N- to C-terminus: DNA repair protein RecO (247 aa).

Belongs to the RecO family.

Functionally, involved in DNA repair and RecF pathway recombination. The sequence is that of DNA repair protein RecO from Caldanaerobacter subterraneus subsp. tengcongensis (strain DSM 15242 / JCM 11007 / NBRC 100824 / MB4) (Thermoanaerobacter tengcongensis).